Here is a 568-residue protein sequence, read N- to C-terminus: MTPATERDDTDTDVVIVGAGPVGLTLANILGLQGVRTMIVEERATLIDYPRGVGLDDEALRTFQAIGLVDKVLPHTVPNQILRFFDGNRRLLAEMAPPDARFGWPKRNGFVQPMVDAELHAGLARFPHVEVRWGHRMAECEETADGVTVRLDGDPTPVRARYLVGCDGGRSATRRLMGVSFDGTTSPTRWLVVDIANDPLGHPNSEVGADPARPYASISIAHGIRRFEFMIHADETDEQAEDPAFIHRMLGLLVPHPERVEVIRHRVYTHHSRIAGAFRKGRMFLAGDAAHLMPVWQGQGYNSGIRDAANLGWKLAAVVDGRAGDALLDTYDVERRKHARAMIDLSTMVGRVISPTNRHVAAVRDKLIRGASVVPTLKRYVLEMRFKPMPRYEQGAVFHPEAPSPTSPAGTLFIQPRVDSRDAQNVLLDEVLGTGFAVLCWNNNPRALLGADLFDRWKALGARFVAARPLTQLHWTGHDDPDVTVIGDRTGALKGWFDAHAESVLFLRPDRCIAGACIAQRAPEVSTALFGVLHLTQGGGNGHHGADRPVLHVAQSATEPSGTVAGTP.

Residues 13 to 42 and 278 to 288 each bind FAD; these read DVVI…IVEE and FRKGRMFLAGD.

Belongs to the PheA/TfdB FAD monooxygenase family. Requires FAD as cofactor.

The enzyme catalyses 3-(3-hydroxyphenyl)propanoate + NADH + O2 + H(+) = 3-(2,3-dihydroxyphenyl)propanoate + NAD(+) + H2O. The catalysed reaction is (2E)-3-(3-hydroxyphenyl)prop-2-enoate + NADH + O2 + H(+) = (2E)-3-(2,3-dihydroxyphenyl)prop-2-enoate + NAD(+) + H2O. The protein operates within aromatic compound metabolism; 3-phenylpropanoate degradation. Its function is as follows. Catalyzes the insertion of one atom of molecular oxygen into position 2 of the phenyl ring of 3-(3-hydroxyphenyl)propionate (3-HPP) and hydroxycinnamic acid (3HCI). This Mycobacterium sp. (strain JLS) protein is 3-(3-hydroxy-phenyl)propionate/3-hydroxycinnamic acid hydroxylase.